The primary structure comprises 364 residues: Geissoschizine synthase (364 aa).

Residue cysteine 51 participates in Zn(2+) binding. Residue asparagine 52 coordinates NADP(+). 7 residues coordinate Zn(2+): histidine 73, glutamate 74, cysteine 104, cysteine 107, cysteine 110, cysteine 118, and cysteine 168. Leucine 194, glycine 196, leucine 197, serine 216, threonine 217, serine 218, lysine 221, arginine 261, valine 280, alanine 282, serine 304, threonine 306, and arginine 351 together coordinate NADP(+).

The protein belongs to the zinc-containing alcohol dehydrogenase family. Class-III subfamily. In terms of assembly, homodimer. The cofactor is Zn(2+). Expressed in leaf epidermis.

The enzyme catalyses (19E)-geissoschizine + NADP(+) = 4,21-dehydrogeissoschizine + NADPH. The protein operates within alkaloid biosynthesis. In terms of biological role, component of the seco-iridoid and derivatives monoterpenoid indole alkaloids (MIAs, e.g. catharanthine, tabersonine, vincadifformine, vindoline, vincristine, quinine and strychnine) biosynthesis pathway. During the conversion of strictosidine aglycone to geissoschizine, catalyzes iminium reduction on 4,21-dehydrogeissoschizine to produce 19E-geissoschizine, precursor of catharanthine and tabersonine derivatives. May also trigger the production of reactive intermediate used by the HL1, HL2, HL3 and HL4 to form catharanthine, vincadifformine and tabersonine. This Catharanthus roseus (Madagascar periwinkle) protein is Geissoschizine synthase.